A 295-amino-acid chain; its full sequence is Putative NADH-ubiquinone oxidoreductase MJ0520 (295 aa).

The next 8 helical transmembrane spans lie at 8–28, 69–89, 129–149, 163–183, 199–219, 220–240, 243–263, and 273–293; these read LIGAINLTIHAFLVGSLLLGL, LYIFVALLDIAIWLAALIIAI, VFSAAAEVPLFAVVAAIYLTT, IHGSLLFKMPICAFAFFILLV, IVSGYMTEHYGLLGAIIYIAE, AIAYFVLLWLFIAVFIGPLVI, PVLTLAVMVVMTVILAFVNGL, and VMLQMTIAGLVLCDVLYRLIV.

This sequence belongs to the complex I subunit 1 family.

The protein localises to the cell membrane. The catalysed reaction is a ubiquinone + NADH + 5 H(+)(in) = a ubiquinol + NAD(+) + 4 H(+)(out). This chain is Putative NADH-ubiquinone oxidoreductase MJ0520, found in Methanocaldococcus jannaschii (strain ATCC 43067 / DSM 2661 / JAL-1 / JCM 10045 / NBRC 100440) (Methanococcus jannaschii).